Here is a 416-residue protein sequence, read N- to C-terminus: Serine hydroxymethyltransferase 1 (416 aa).

(6S)-5,6,7,8-tetrahydrofolate contacts are provided by residues Leu-121 and 125-127; that span reads GHL. Position 229 is an N6-(pyridoxal phosphate)lysine (Lys-229). Residues Glu-245 and 354–356 contribute to the (6S)-5,6,7,8-tetrahydrofolate site; that span reads SPF.

The protein belongs to the SHMT family. In terms of assembly, homodimer. Pyridoxal 5'-phosphate serves as cofactor.

It is found in the cytoplasm. It carries out the reaction (6R)-5,10-methylene-5,6,7,8-tetrahydrofolate + glycine + H2O = (6S)-5,6,7,8-tetrahydrofolate + L-serine. It functions in the pathway one-carbon metabolism; tetrahydrofolate interconversion. It participates in amino-acid biosynthesis; glycine biosynthesis; glycine from L-serine: step 1/1. Catalyzes the reversible interconversion of serine and glycine with tetrahydrofolate (THF) serving as the one-carbon carrier. This reaction serves as the major source of one-carbon groups required for the biosynthesis of purines, thymidylate, methionine, and other important biomolecules. Also exhibits THF-independent aldolase activity toward beta-hydroxyamino acids, producing glycine and aldehydes, via a retro-aldol mechanism. In Vibrio cholerae serotype O1 (strain ATCC 39315 / El Tor Inaba N16961), this protein is Serine hydroxymethyltransferase 1.